A 230-amino-acid polypeptide reads, in one-letter code: Cytidylate kinase (230 aa).

12 to 20 (GPSGTGKST) contacts ATP.

This sequence belongs to the cytidylate kinase family. Type 1 subfamily.

It localises to the cytoplasm. It catalyses the reaction CMP + ATP = CDP + ADP. The catalysed reaction is dCMP + ATP = dCDP + ADP. The sequence is that of Cytidylate kinase from Corynebacterium efficiens (strain DSM 44549 / YS-314 / AJ 12310 / JCM 11189 / NBRC 100395).